The sequence spans 332 residues: DNA-directed RNA polymerase subunit alpha (332 aa).

The alpha N-terminal domain (alpha-NTD) stretch occupies residues 1-234 (MTVTANQVLR…DQLSVFGDFT (234 aa)). Residues 248–332 (VDPVLLRPID…AGVASHGMLG (85 aa)) are alpha C-terminal domain (alpha-CTD).

The protein belongs to the RNA polymerase alpha chain family. In terms of assembly, homodimer. The RNAP catalytic core consists of 2 alpha, 1 beta, 1 beta' and 1 omega subunit. When a sigma factor is associated with the core the holoenzyme is formed, which can initiate transcription.

The catalysed reaction is RNA(n) + a ribonucleoside 5'-triphosphate = RNA(n+1) + diphosphate. DNA-dependent RNA polymerase catalyzes the transcription of DNA into RNA using the four ribonucleoside triphosphates as substrates. This is DNA-directed RNA polymerase subunit alpha from Stenotrophomonas maltophilia (strain K279a).